We begin with the raw amino-acid sequence, 432 residues long: Anaerobic glycerol-3-phosphate dehydrogenase subunit B (432 aa).

The protein belongs to the anaerobic G-3-P dehydrogenase subunit B family. In terms of assembly, composed of a catalytic GlpA/B dimer and of membrane bound GlpC. It depends on FMN as a cofactor.

The enzyme catalyses a quinone + sn-glycerol 3-phosphate = dihydroxyacetone phosphate + a quinol. Its pathway is polyol metabolism; glycerol degradation via glycerol kinase pathway; glycerone phosphate from sn-glycerol 3-phosphate (anaerobic route): step 1/1. Functionally, conversion of glycerol 3-phosphate to dihydroxyacetone. Uses fumarate or nitrate as electron acceptor. The protein is Anaerobic glycerol-3-phosphate dehydrogenase subunit B (glpB) of Haemophilus influenzae (strain ATCC 51907 / DSM 11121 / KW20 / Rd).